Consider the following 49-residue polypeptide: Large ribosomal subunit protein bL33 (49 aa).

It belongs to the bacterial ribosomal protein bL33 family.

This Thermotoga maritima (strain ATCC 43589 / DSM 3109 / JCM 10099 / NBRC 100826 / MSB8) protein is Large ribosomal subunit protein bL33 (rpmG).